The sequence spans 1095 residues: Putative patatin-like phospholipase domain-containing protein M110.7 (1095 aa).

Residues 9-29 (LLLIFENILELCMCITLVILI) form a helical membrane-spanning segment. Residues 75–113 (HKKRSSKEEMTPDKKRDSSEKISKQPPRELFEPNEQEQV) are disordered. Over residues 80 to 105 (SKEEMTPDKKRDSSEKISKQPPRELF) the composition is skewed to basic and acidic residues. A nucleoside 3',5'-cyclic phosphate is bound by residues 144–237 (VETL…LTSF), 327–416 (RKYE…IQFL), and 450–509 (IETG…TVMA). The PNPLA domain occupies 768–935 (IVFGGGGARG…VNNLPADIMR (168 aa)). The GXGXXG signature appears at 772 to 777 (GGGARG). The GXSXG motif lies at 799–803 (GTSIG). Ser-801 functions as the Nucleophile in the catalytic mechanism. Asp-922 acts as the Proton acceptor in catalysis. Positions 922-924 (DGA) match the DGA/G motif.

This sequence belongs to the NTE family.

The protein resides in the membrane. In Caenorhabditis elegans, this protein is Putative patatin-like phospholipase domain-containing protein M110.7.